We begin with the raw amino-acid sequence, 1861 residues long: Amylopullulanase (1861 aa).

An N-terminal signal peptide occupies residues 1-35; the sequence is MNKKLFTNRFISFNMSLLLVLTAVFSSIPLHSVHA. The Ca(2+) site is built by D248, N250, D288, D343, N401, D403, N406, D407, and D453. Residues H526 and R626 each contribute to the substrate site. Residue D628 is the Nucleophile of the active site. The active-site Proton donor is E657. Substrate is bound by residues 733–734, D793, and R797; that span reads HD. 2 consecutive Fibronectin type-III domains span residues 929 to 1021 and 1158 to 1252; these read APQA…AYPI and KPTA…VVPI. One can recognise a CBM20 domain in the interval 1246–1354; sequence KPDVVPIKVI…INDTVYRWRD (109 aa). The tract at residues 1448–1486 is disordered; the sequence is QENNSGSGTGNNNTSTSGSNSSSTGSGSTGSTSITSNIS. A compositionally biased stretch (low complexity) spans 1450 to 1486; it reads NNSGSGTGNNNTSTSGSNSSSTGSGSTGSTSITSNIS. SLH domains follow at residues 1677-1740, 1741-1799, and 1802-1861; these read EYDK…YSGE, FSDV…KEEN, and ATTF…SGNI.

This sequence belongs to the glycosyl hydrolase 13 family. Ca(2+) is required as a cofactor. Glycosylated.

The protein localises to the secreted. It is found in the cell wall. It carries out the reaction Endohydrolysis of (1-&gt;4)-alpha-D-glucosidic linkages in polysaccharides containing three or more (1-&gt;4)-alpha-linked D-glucose units.. The enzyme catalyses Hydrolysis of (1-&gt;6)-alpha-D-glucosidic linkages in pullulan, amylopectin and glycogen, and in the alpha- and beta-limit dextrins of amylopectin and glycogen.. In Thermoanaerobacterium thermosulfurigenes (Clostridium thermosulfurogenes), this protein is Amylopullulanase (amyB).